Here is a 113-residue protein sequence, read N- to C-terminus: Class I hydrophobin fvh1 (113 aa).

The first 20 residues, 1–20, serve as a signal peptide directing secretion; the sequence is MVSFRAFTVAASLFATLAAA. Disulfide bonds link C34-C94, C41-C88, C42-C75, and C95-C108. N35 carries N-linked (GlcNAc...) asparagine glycosylation. An N-linked (GlcNAc...) asparagine glycan is attached at N97.

The protein belongs to the fungal hydrophobin family. Self-assembles to form functional amyloid fibrils called rodlets. Self-assembly into fibrillar rodlets occurs spontaneously at hydrophobic:hydrophilic interfaces and the rodlets further associate laterally to form amphipathic monolayers.

Its subcellular location is the secreted. It localises to the cell wall. Aerial growth, conidiation, and dispersal of filamentous fungi in the environment rely upon a capability of their secreting small amphipathic proteins called hydrophobins (HPBs) with low sequence identity. Class I can self-assemble into an outermost layer of rodlet bundles on aerial cell surfaces, conferring cellular hydrophobicity that supports fungal growth, development and dispersal; whereas Class II form highly ordered films at water-air interfaces through intermolecular interactions but contribute nothing to the rodlet structure. Fvh1 is a class I hydrophobin involved in fruiting body initiation. The chain is Class I hydrophobin fvh1 from Flammulina velutipes (Agaricus velutipes).